We begin with the raw amino-acid sequence, 503 residues long: Maturase K (503 aa).

Belongs to the intron maturase 2 family. MatK subfamily.

It localises to the plastid. It is found in the chloroplast. In terms of biological role, usually encoded in the trnK tRNA gene intron. Probably assists in splicing its own and other chloroplast group II introns. This is Maturase K from Rhamnus cathartica (Common buckthorn).